The chain runs to 534 residues: Serine protease vicPa (534 aa).

The N-terminal stretch at 1-17 (MLCYLLIHILCLQAVLG) is a signal peptide. N65 and N126 each carry an N-linked (GlcNAc...) asparagine glycan. S174 serves as the catalytic Charge relay system. Residues N297, N416, and N436 are each glycosylated (N-linked (GlcNAc...) asparagine). The Charge relay system role is filled by D450.

It belongs to the peptidase S28 family.

The protein operates within mycotoxin biosynthesis. In terms of biological role, serine protease, part of the gene cluster that mediates the biosynthesis of the secondary metabolite victorin, the molecular basis for Victoria blight of oats. Within the pathway, vicPa and vicPb are probably involved in the processing of the vicA1 and vicA2 precursors. The pathway starts with the processing of the precursor vicA1 by several endopeptidases including kexin proteases as well as the cluster-specific S28 family peptidases vicPa and vicPb to produce 7 identical copies of the hexapeptide Gly-Leu-Lys-Leu-Ala-Phe. After being excised from the precursor peptide, the core peptides are cyclized and modified post-translationally by enzymes encoded within the gene cluster. The ustYa family oxidase vicYb is required for the formation of the macrocycle in victorin and the copper amine oxidases (CAOs) vicK1 and vicK2 are responsible for converting victorin to the active form by oxidizing the N-terminal glycyl residue in the peptides to glyoxylate. Relaxed substrate specificity of enzymes in the victorin biosynthetic pathway results in a metabolic grid that produces a set of analogs including victorinines B, C, E or HV-toxin M. The protein is Serine protease vicPa of Bipolaris victoriae (strain FI3) (Victoria blight of oats agent).